A 184-amino-acid chain; its full sequence is Small ribosomal subunit protein uS4c (184 aa).

An S4 RNA-binding domain is found at 82 to 143 (MRLDNILFRL…KQRSKALIQN (62 aa)).

The protein belongs to the universal ribosomal protein uS4 family. In terms of assembly, part of the 30S ribosomal subunit. Contacts protein S5. The interaction surface between S4 and S5 is involved in control of translational fidelity.

It localises to the plastid. It is found in the chloroplast. Functionally, one of the primary rRNA binding proteins, it binds directly to 16S rRNA where it nucleates assembly of the body of the 30S subunit. Its function is as follows. With S5 and S12 plays an important role in translational accuracy. The protein is Small ribosomal subunit protein uS4c (rps4) of Patersonia fragilis (Short purple-flag).